A 23-amino-acid chain; its full sequence is Septenin 2d (23 aa).

As to expression, expressed in skin glands.

The protein localises to the secreted. Functionally, may act as an antimicrobial peptide. This is Septenin 2d from Osteopilus septentrionalis (Cuban treefrog).